The chain runs to 243 residues: NH(3)-dependent NAD(+) synthetase (243 aa).

Position 31–38 (Gly31–Ser38) interacts with ATP. A Mg(2+)-binding site is contributed by Asp37. Arg110 lines the deamido-NAD(+) pocket. Residue Thr130 coordinates ATP. A Mg(2+)-binding site is contributed by Glu135. Residues Lys143 and Asp150 each coordinate deamido-NAD(+). ATP-binding residues include Lys159 and Ser181. A deamido-NAD(+)-binding site is contributed by His227 to Lys228.

This sequence belongs to the NAD synthetase family. Homodimer.

It carries out the reaction deamido-NAD(+) + NH4(+) + ATP = AMP + diphosphate + NAD(+) + H(+). It functions in the pathway cofactor biosynthesis; NAD(+) biosynthesis; NAD(+) from deamido-NAD(+) (ammonia route): step 1/1. In terms of biological role, catalyzes the ATP-dependent amidation of deamido-NAD to form NAD. Uses ammonia as a nitrogen source. The polypeptide is NH(3)-dependent NAD(+) synthetase (Malacoplasma penetrans (strain HF-2) (Mycoplasma penetrans)).